We begin with the raw amino-acid sequence, 145 residues long: DnaJ homolog subfamily B member 3 (145 aa).

The region spanning 1-69 (MVDYYEVLDV…KKRDIYDRYG (69 aa)) is the J domain.

As to expression, expressed in sperm (at protein level).

May operate as a co-chaperone of the male germ cell- and haploid stage-specific Hsp70 proteins. This chain is DnaJ homolog subfamily B member 3 (DNAJB3), found in Homo sapiens (Human).